A 271-amino-acid polypeptide reads, in one-letter code: MMRIALGIQYDGAAFCGWQSQPHGKTVQDALERSLAEFAQTSLHTTVAGRTDTGVHGLGQVVHFDTDLDRADFSWVRGTNAFLPPTVAVQWAKPMPDTFHARFAAFERTYYYALYVHPVRSPMLAGRAGWVHTPLDVDAMREAAAHLVGEHDFSAFRSSECQAKSPVKHLYQIGIRPDGDFIHFRFRANAFLHHMVRNLMGCLVAVGRGRYPSSWLAEVLESRDRDCAAPTFMPEGLYLAHVGYPAEFAVPPAQLGSVPWSSVWADLDGRT.

The active-site Nucleophile is Asp52. Position 110 (Tyr110) interacts with substrate.

The protein belongs to the tRNA pseudouridine synthase TruA family. As to quaternary structure, homodimer.

It carries out the reaction uridine(38/39/40) in tRNA = pseudouridine(38/39/40) in tRNA. Functionally, formation of pseudouridine at positions 38, 39 and 40 in the anticodon stem and loop of transfer RNAs. The protein is tRNA pseudouridine synthase A of Burkholderia mallei (strain NCTC 10247).